A 228-amino-acid polypeptide reads, in one-letter code: Eukaryotic translation initiation factor 6 (228 aa).

It belongs to the eIF-6 family. Monomer. Associates with the 60S ribosomal subunit.

The protein localises to the cytoplasm. Its subcellular location is the nucleus. The protein resides in the nucleolus. Binds to the 60S ribosomal subunit and prevents its association with the 40S ribosomal subunit to form the 80S initiation complex in the cytoplasm. May also be involved in ribosome biogenesis. The polypeptide is Eukaryotic translation initiation factor 6 (Guillardia theta (Cryptophyte)).